The sequence spans 670 residues: MSKAFTLNSDFKPAGDQPEAIRRLKEGLEDGLAHQTLLGVTGSGKTFTIANVIADLNRPTMMLAPNKTLAAQLYGEMKEFFPENAVEYFVSYYDYYQPEAYVPSSDTFIEKDASVNEHIEQMRLSATKALLERRDVIVVASVSAIYGLGDPDLYLKMMLHLTQGMLIDQRAILRRLAELQYARNDQAFQRGTFRVRGEVIDIFPAESDEIALRVELFDEEVERLSLFDPLTGHVLQTVPRYTIYPKTHYVTPRERILQAMEDIKVELADRKKVLLANDKLVEEQRLSQRTQFDLEMMNELGYCSGIENYSRYLSGRGPGEPPPTLFDYLPADGLLVIDESHVTVPQIGGMYRGDRARKETLVEYGFRLPSALDNRPMKFEEFEALAPQTIYVSATPSHYELEKSGGDVIDQVVRPTGLLDPIIEVRPVGTQVDDLLSEIRLRAAINERVLVTTLTKRMAEDLTEYLQEHGERVRYLHSDIDTVERVEIIRDLRLGEFDVLVGINLLREGLDMPEVSLVAILDADKEGFLRSERSLIQTIGRAARNLRGKAILYGDRITASMAKAISETERRREKQEAYNTEHGIVPQGINKKISDILQLGQSANKGKGRGNRKAAEPAARYELMTPKALELKIRELESKMLTHAQNLEFEEAAALRDEVQVLRAQFIAIS.

Residues Glu-26–Arg-414 enclose the Helicase ATP-binding domain. Gly-39 to Thr-46 contributes to the ATP binding site. Positions Tyr-92–Val-115 match the Beta-hairpin motif. Residues Gln-431–Leu-597 form the Helicase C-terminal domain. Residues Glu-630–Gln-665 enclose the UVR domain.

It belongs to the UvrB family. In terms of assembly, forms a heterotetramer with UvrA during the search for lesions. Interacts with UvrC in an incision complex.

The protein localises to the cytoplasm. Functionally, the UvrABC repair system catalyzes the recognition and processing of DNA lesions. A damage recognition complex composed of 2 UvrA and 2 UvrB subunits scans DNA for abnormalities. Upon binding of the UvrA(2)B(2) complex to a putative damaged site, the DNA wraps around one UvrB monomer. DNA wrap is dependent on ATP binding by UvrB and probably causes local melting of the DNA helix, facilitating insertion of UvrB beta-hairpin between the DNA strands. Then UvrB probes one DNA strand for the presence of a lesion. If a lesion is found the UvrA subunits dissociate and the UvrB-DNA preincision complex is formed. This complex is subsequently bound by UvrC and the second UvrB is released. If no lesion is found, the DNA wraps around the other UvrB subunit that will check the other stand for damage. This is UvrABC system protein B from Pectobacterium atrosepticum (strain SCRI 1043 / ATCC BAA-672) (Erwinia carotovora subsp. atroseptica).